A 259-amino-acid chain; its full sequence is 5'-nucleotidase SurE (259 aa).

Residues aspartate 8, aspartate 9, serine 40, and asparagine 92 each coordinate a divalent metal cation.

Belongs to the SurE nucleotidase family. A divalent metal cation serves as cofactor.

The protein localises to the cytoplasm. The catalysed reaction is a ribonucleoside 5'-phosphate + H2O = a ribonucleoside + phosphate. In terms of biological role, nucleotidase that shows phosphatase activity on nucleoside 5'-monophosphates. This chain is 5'-nucleotidase SurE, found in Stenotrophomonas maltophilia (strain K279a).